The primary structure comprises 1327 residues: Putative ATP-dependent RNA helicase ucp12 (1327 aa).

Disordered stretches follow at residues 1–58 (MGSK…KQLV) and 201–222 (QAAR…NEKV). The span at 18 to 41 (SKNKEKNIKGKKKNSLDPIEKNKQ) shows a compositional bias: basic and acidic residues. Residues 42–58 (ETAGLQTTSRPTAKQLV) show a composition bias toward polar residues. The UBA domain maps to 276-315 (EPDTSIVNDLISLGFRDIHAKEACQYCVSLEDALEWLIIH). In terms of domain architecture, RWD spans 405–504 (DDVSALQSIL…NHLQENIEDF (100 aa)). The Helicase ATP-binding domain occupies 587–756 (MDAIQHSQVV…FGNAGHLHIH (170 aa)). 600–607 (GETGSGKS) provides a ligand contact to ATP. The short motif at 703 to 706 (DEVH) is the DEAH box element. In terms of domain architecture, Helicase C-terminal spans 797–968 (LISRLVSSID…QVCLNVVPLV (172 aa)).

Belongs to the DEAD box helicase family. DEAH subfamily.

Its subcellular location is the cytoplasm. The catalysed reaction is ATP + H2O = ADP + phosphate + H(+). In terms of biological role, probable ATP-binding RNA helicase. The protein is Putative ATP-dependent RNA helicase ucp12 (ucp12) of Schizosaccharomyces pombe (strain 972 / ATCC 24843) (Fission yeast).